The sequence spans 557 residues: Formate--tetrahydrofolate ligase (557 aa).

Position 65–72 (65–72 (TPAGEGKT)) interacts with ATP.

Belongs to the formate--tetrahydrofolate ligase family.

It catalyses the reaction (6S)-5,6,7,8-tetrahydrofolate + formate + ATP = (6R)-10-formyltetrahydrofolate + ADP + phosphate. It functions in the pathway one-carbon metabolism; tetrahydrofolate interconversion. The chain is Formate--tetrahydrofolate ligase from Methylorubrum extorquens (strain CM4 / NCIMB 13688) (Methylobacterium extorquens).